Here is a 61-residue protein sequence, read N- to C-terminus: Small ribosomal subunit protein uS14 (61 aa).

Residues Cys-24, Cys-27, Cys-40, and Cys-43 each coordinate Zn(2+).

It belongs to the universal ribosomal protein uS14 family. Zinc-binding uS14 subfamily. In terms of assembly, part of the 30S ribosomal subunit. Contacts proteins S3 and S10. The cofactor is Zn(2+).

Its function is as follows. Binds 16S rRNA, required for the assembly of 30S particles and may also be responsible for determining the conformation of the 16S rRNA at the A site. This is Small ribosomal subunit protein uS14 from Helicobacter pylori (strain J99 / ATCC 700824) (Campylobacter pylori J99).